The primary structure comprises 91 residues: Large ribosomal subunit protein bL27 (91 aa).

The span at 1–10 (MAQKKGGGST) shows a compositional bias: gly residues. A disordered region spans residues 1–20 (MAQKKGGGSTRNGRDSQPKM).

The protein belongs to the bacterial ribosomal protein bL27 family.

This Verminephrobacter eiseniae (strain EF01-2) protein is Large ribosomal subunit protein bL27.